Reading from the N-terminus, the 295-residue chain is 3-hydroxy-5-phosphonooxypentane-2,4-dione thiolase (295 aa).

Residue lysine 203 is the Schiff-base intermediate with substrate of the active site.

The protein belongs to the DeoC/FbaB aldolase family. In terms of assembly, homodecamer.

It is found in the cytoplasm. It carries out the reaction dihydroxyacetone phosphate + acetyl-CoA = 3-hydroxy-2,4-dioxopentyl phosphate + CoA. In terms of biological role, involved in the degradation of phospho-AI-2, thereby terminating induction of the lsr operon and closing the AI-2 signaling cycle. Catalyzes the transfer of an acetyl moiety from 3-hydroxy-5-phosphonooxypentane-2,4-dione to CoA to form glycerone phosphate and acetyl-CoA. This Enterobacter sp. (strain 638) protein is 3-hydroxy-5-phosphonooxypentane-2,4-dione thiolase.